The chain runs to 717 residues: Acetone carboxylase beta subunit (717 aa).

As to quaternary structure, heterohexamer of two alpha, two beta and two gamma subunits. Requires Fe cation as cofactor. Mg(2+) serves as cofactor. Zn(2+) is required as a cofactor. In terms of processing, the N-terminus is blocked.

The catalysed reaction is acetone + hydrogencarbonate + 2 ATP + 3 H2O = acetoacetate + 2 AMP + 4 phosphate + 4 H(+). Its function is as follows. Catalyzes the carboxylation of acetone to form acetoacetate. Has a reduced activity on butanone, and no activity on 2-pentatone, 3-pentatone, 2-hexanone, chloroacetone, pyruvate, phosphoenolpyruvate, acetaldehyde, propionaldehyde and propylene oxide. In Xanthobacter autotrophicus (strain ATCC BAA-1158 / Py2), this protein is Acetone carboxylase beta subunit.